The following is a 243-amino-acid chain: Small ribosomal subunit protein uS3 (243 aa).

The region spanning 39 to 110 (IRTFIQKKYS…QVRINVVEVE (72 aa)) is the KH type-2 domain. A disordered region spans residues 221–243 (GAIPRRKGSRKPQQFEDRSNENS). Basic and acidic residues predominate over residues 233–243 (QQFEDRSNENS).

Belongs to the universal ribosomal protein uS3 family. Part of the 30S ribosomal subunit. Forms a tight complex with proteins S10 and S14.

Its function is as follows. Binds the lower part of the 30S subunit head. Binds mRNA in the 70S ribosome, positioning it for translation. The sequence is that of Small ribosomal subunit protein uS3 from Prochlorococcus marinus subsp. pastoris (strain CCMP1986 / NIES-2087 / MED4).